The following is a 174-amino-acid chain: Protein COFACTOR ASSEMBLY OF COMPLEX C SUBUNIT B CCB3, chloroplastic (174 aa).

The N-terminal 39 residues, 1-39 (MTTVTTSFVSFSPALMIFQKKSRRSSPNFRNRSTSLPIV), are a transit peptide targeting the chloroplast. Over 40–78 (SATLSHIEEAATTTNLIRQTNSISESLRNISLADLDPGT) the chain is Lumenal. The chain crosses the membrane as a helical span at residues 79-99 (AKLAIGILGPALSAFGFLFIL). Topologically, residues 100–147 (RIVMSWYPKLPVDKFPYVLAYAPTEPILVQTRKVIPPLAGVDVTPVVW) are stromal. A helical membrane pass occupies residues 148-168 (FGLVSFLSEILVGPQGLLVLV). Over 169–174 (SQQQVN) the chain is Lumenal.

Belongs to the YggT family.

Its subcellular location is the plastid. It localises to the chloroplast thylakoid membrane. Functionally, required for the biogenesis and accumulation of native cytochrome b6 in the thylakoid membrane. Controls the conversion of apocytochrome b6 to holocytochrome b6. Required for covalent binding of the c-type heme to cytochrome b6. The sequence is that of Protein COFACTOR ASSEMBLY OF COMPLEX C SUBUNIT B CCB3, chloroplastic from Arabidopsis thaliana (Mouse-ear cress).